The chain runs to 172 residues: Ribosome maturation factor RimM (172 aa).

The PRC barrel domain maps to 98-171 (PGEYYYHQIV…KVIVELMEGL (74 aa)).

This sequence belongs to the RimM family. In terms of assembly, binds ribosomal protein uS19.

It is found in the cytoplasm. An accessory protein needed during the final step in the assembly of 30S ribosomal subunit, possibly for assembly of the head region. Essential for efficient processing of 16S rRNA. May be needed both before and after RbfA during the maturation of 16S rRNA. It has affinity for free ribosomal 30S subunits but not for 70S ribosomes. This Levilactobacillus brevis (strain ATCC 367 / BCRC 12310 / CIP 105137 / JCM 1170 / LMG 11437 / NCIMB 947 / NCTC 947) (Lactobacillus brevis) protein is Ribosome maturation factor RimM.